A 591-amino-acid chain; its full sequence is Formate--tetrahydrofolate ligase (591 aa).

74–81 (TPLGEGKS) lines the ATP pocket.

Belongs to the formate--tetrahydrofolate ligase family.

It carries out the reaction (6S)-5,6,7,8-tetrahydrofolate + formate + ATP = (6R)-10-formyltetrahydrofolate + ADP + phosphate. The protein operates within one-carbon metabolism; tetrahydrofolate interconversion. The sequence is that of Formate--tetrahydrofolate ligase from Desulfovibrio desulfuricans (strain ATCC 27774 / DSM 6949 / MB).